The sequence spans 318 residues: Oncosphere antigen A (318 aa).

3 Fibronectin type-III domains span residues 6-103 (IPQN…TPLP), 109-207 (KPSF…ISRA), and 211-308 (VPQN…TPSV).

This is Oncosphere antigen A (ONCA) from Hydatigena taeniaeformis (Feline tapeworm).